The following is a 404-amino-acid chain: Indole-3-acetate O-methyltransferase 1 (404 aa).

Residues 82–83 (GC), asparagine 88, aspartate 120, 169–171 (TFY), and 186–188 (TFS) each bind S-adenosyl-L-methionine. The Mg(2+) site is built by asparagine 208, valine 212, arginine 294, aspartate 295, phenylalanine 297, and asparagine 298.

This sequence belongs to the methyltransferase superfamily. SABATH family. Homodimer. Requires Mg(2+) as cofactor. As to expression, expressed in roots and panicles.

The enzyme catalyses (indol-3-yl)acetate + S-adenosyl-L-methionine = methyl (indol-3-yl)acetate + S-adenosyl-L-homocysteine. In terms of biological role, catalyzes the methylation of the free carboxyl end of the plant hormone indole-3-acetic acid (IAA). Converts IAA to IAA methyl ester (MeIAA). Regulates IAA activities by IAA methylation. Methylation of IAA plays an important role in regulating plant development and auxin homeostasis. MeIAA seems to be an inactive form of IAA. The sequence is that of Indole-3-acetate O-methyltransferase 1 (IAMT1) from Oryza sativa subsp. japonica (Rice).